The following is a 64-amino-acid chain: uncharacterized protein (64 aa).

This is an uncharacterized protein from Dictyostelium discoideum (Social amoeba).